Here is a 396-residue protein sequence, read N- to C-terminus: Elongation factor Tu (396 aa).

Positions 10-206 constitute a tr-type G domain; that stretch reads KPHVNVGTIG…ALDSYIPTPE (197 aa). The interval 19-26 is G1; it reads GHVDHGKT. 19-26 provides a ligand contact to GTP; sequence GHVDHGKT. Threonine 26 provides a ligand contact to Mg(2+). The tract at residues 60–64 is G2; that stretch reads GITIN. The G3 stretch occupies residues 81–84; the sequence is DCPG. Residues 81–85 and 136–139 each bind GTP; these read DCPGH and NKCD. The tract at residues 136 to 139 is G4; sequence NKCD. The segment at 174-176 is G5; that stretch reads SAK.

It belongs to the TRAFAC class translation factor GTPase superfamily. Classic translation factor GTPase family. EF-Tu/EF-1A subfamily. Monomer.

The protein resides in the cytoplasm. The enzyme catalyses GTP + H2O = GDP + phosphate + H(+). Functionally, GTP hydrolase that promotes the GTP-dependent binding of aminoacyl-tRNA to the A-site of ribosomes during protein biosynthesis. In Methylibium petroleiphilum (strain ATCC BAA-1232 / LMG 22953 / PM1), this protein is Elongation factor Tu.